The following is a 427-amino-acid chain: Glutamate-1-semialdehyde 2,1-aminomutase (427 aa).

Lys-265 carries the N6-(pyridoxal phosphate)lysine modification.

The protein belongs to the class-III pyridoxal-phosphate-dependent aminotransferase family. HemL subfamily. In terms of assembly, homodimer. It depends on pyridoxal 5'-phosphate as a cofactor.

It localises to the cytoplasm. It carries out the reaction (S)-4-amino-5-oxopentanoate = 5-aminolevulinate. The protein operates within porphyrin-containing compound metabolism; protoporphyrin-IX biosynthesis; 5-aminolevulinate from L-glutamyl-tRNA(Glu): step 2/2. This Pseudomonas aeruginosa (strain LESB58) protein is Glutamate-1-semialdehyde 2,1-aminomutase.